We begin with the raw amino-acid sequence, 662 residues long: DNA ligase (662 aa).

NAD(+) is bound by residues 34–38, 83–84, and Glu-113; these read DYDYD and SI. Lys-115 serves as the catalytic N6-AMP-lysine intermediate. Positions 136, 172, 286, and 310 each coordinate NAD(+). Cys-404, Cys-407, Cys-422, and Cys-427 together coordinate Zn(2+). A BRCT domain is found at 583–662; that stretch reads RESSSCLGKT…NDLLKILYPN (80 aa).

The protein belongs to the NAD-dependent DNA ligase family. LigA subfamily. Requires Mg(2+) as cofactor. It depends on Mn(2+) as a cofactor.

The enzyme catalyses NAD(+) + (deoxyribonucleotide)n-3'-hydroxyl + 5'-phospho-(deoxyribonucleotide)m = (deoxyribonucleotide)n+m + AMP + beta-nicotinamide D-nucleotide.. Its function is as follows. DNA ligase that catalyzes the formation of phosphodiester linkages between 5'-phosphoryl and 3'-hydroxyl groups in double-stranded DNA using NAD as a coenzyme and as the energy source for the reaction. It is essential for DNA replication and repair of damaged DNA. The sequence is that of DNA ligase from Chlamydia caviae (strain ATCC VR-813 / DSM 19441 / 03DC25 / GPIC) (Chlamydophila caviae).